Here is a 495-residue protein sequence, read N- to C-terminus: RNA-binding KH domain-containing protein PEPPER (495 aa).

3 consecutive KH domains span residues 73 to 140 (DCVF…MDAV), 165 to 234 (FSSV…LEAI), and 340 to 403 (QVSQ…EQLI). Residues 474–495 (GQTYGSEYRPASDVGGYSSYNL) are disordered.

Interacts with HUA1 and HEN4. In terms of tissue distribution, detected in roots, shoots, leaves, flowers and fruits.

The protein localises to the nucleus. Its function is as follows. Regulates vegetative and gynoecium development. In concert with HUA2, antagonizes FLK by positively regulating FLC probably at transcriptional and post-transcriptional levels, and thus acts as a negative regulator of flowering. In Arabidopsis thaliana (Mouse-ear cress), this protein is RNA-binding KH domain-containing protein PEPPER.